The chain runs to 47 residues: MKKIRWVILIIVLIACVILWTQTINVMCDQDVQFFSGICAINQFIPW.

Residues 6–26 (WVILIIVLIACVILWTQTINV) form a helical membrane-spanning segment.

Belongs to the MgrB family. As to quaternary structure, may form homooligomers. Probably interacts with the periplasmic domain of PhoQ.

The protein resides in the cell inner membrane. In terms of biological role, phoP-regulated transcription is redox-sensitive, being activated when the periplasm becomes more reducing. MgrB acts between DsbA/DsbB and PhoP/PhoQ in this pathway. Represses PhoP/PhoQ signaling, possibly by binding to the periplasmic domain of PhoQ, altering its activity and that of downstream effector PhoP. In Enterobacter sp. (strain 638), this protein is PhoP/PhoQ regulator MgrB.